The chain runs to 105 residues: Meiotically up-regulated gene 52 protein (105 aa).

Its function is as follows. Has a role in meiosis. The sequence is that of Meiotically up-regulated gene 52 protein (mug52) from Schizosaccharomyces pombe (strain 972 / ATCC 24843) (Fission yeast).